A 226-amino-acid chain; its full sequence is MGQKVNPHGLRIGIIKDWDTKWYANDKNFSEYLVEDFKIRKFIKNKLYSAGISRIEIERAANKVKINVHAAKPGLIIGKGGAGIEELRKQLEKMTQKNILINITEIKVPELDAQIVAENIASQLEKRISFRRAMKQAMARAMRLGAKGIKTAVSGRIAGAEIARTEHYHEGTIPLQTLRADIDYGFAEANTTYGKLGVKVWIYKGEVLPAVKKDKGRKEEISNVNA.

Positions 39–107 constitute a KH type-2 domain; that stretch reads IRKFIKNKLY…NILINITEIK (69 aa).

This sequence belongs to the universal ribosomal protein uS3 family. As to quaternary structure, part of the 30S ribosomal subunit. Forms a tight complex with proteins S10 and S14.

Its function is as follows. Binds the lower part of the 30S subunit head. Binds mRNA in the 70S ribosome, positioning it for translation. The protein is Small ribosomal subunit protein uS3 of Acetivibrio thermocellus (strain ATCC 27405 / DSM 1237 / JCM 9322 / NBRC 103400 / NCIMB 10682 / NRRL B-4536 / VPI 7372) (Clostridium thermocellum).